The chain runs to 1178 residues: Pyruvate carboxylase 1 (1178 aa).

A Biotin carboxylation domain is found at 18 to 470; it reads EKNKILVANR…WTTFIDDTPQ (453 aa). Positions 136, 220, and 255 each coordinate ATP. One can recognise an ATP-grasp domain in the interval 140-337; it reads RNLAAKANVP…IVAAQIQIAA (198 aa). Arg-312 is an active-site residue. The region spanning 557–824 is the Pyruvate carboxyltransferase domain; it reads TLLMDTTWRD…DTGINVEHVR (268 aa). Substrate is bound by residues 565–569 and Arg-638; that span reads RDAHQ. Asp-566 lines the a divalent metal cation pocket. 3 residues coordinate a divalent metal cation: Lys-734, His-764, and His-766. Lys-734 carries the post-translational modification N6-carboxylysine. A substrate-binding site is contributed by Thr-898. In terms of domain architecture, Biotinyl-binding spans 1094–1169; it reads KADMHDPLHI…DSSDLLVLLE (76 aa). Residue Lys-1135 is modified to N6-biotinyllysine.

In terms of assembly, homotetramer. Biotin serves as cofactor. Zn(2+) is required as a cofactor.

The protein localises to the cytoplasm. It carries out the reaction hydrogencarbonate + pyruvate + ATP = oxaloacetate + ADP + phosphate + H(+). The protein operates within carbohydrate biosynthesis; gluconeogenesis. Pyruvate carboxylase catalyzes a 2-step reaction, involving the ATP-dependent carboxylation of the covalently attached biotin in the first step and the transfer of the carboxyl group to pyruvate in the second. This Saccharomyces cerevisiae (strain ATCC 204508 / S288c) (Baker's yeast) protein is Pyruvate carboxylase 1 (PYC1).